Consider the following 278-residue polypeptide: NADPH-dependent 7-cyano-7-deazaguanine reductase (278 aa).

Residue 87–89 (IES) coordinates substrate. Position 89–90 (89–90 (SK)) interacts with NADPH. The active-site Thioimide intermediate is the Cys185. Catalysis depends on Asp192, which acts as the Proton donor. A substrate-binding site is contributed by 224-225 (HE). NADPH is bound at residue 253–254 (RG). The disordered stretch occupies residues 255-278 (GLDINPYRSTNPTFSVQNHRSFRQ). Residues 261 to 278 (YRSTNPTFSVQNHRSFRQ) show a composition bias toward polar residues.

Belongs to the GTP cyclohydrolase I family. QueF type 2 subfamily. In terms of assembly, homodimer.

It localises to the cytoplasm. It catalyses the reaction 7-aminomethyl-7-carbaguanine + 2 NADP(+) = 7-cyano-7-deazaguanine + 2 NADPH + 3 H(+). It functions in the pathway tRNA modification; tRNA-queuosine biosynthesis. Its function is as follows. Catalyzes the NADPH-dependent reduction of 7-cyano-7-deazaguanine (preQ0) to 7-aminomethyl-7-deazaguanine (preQ1). This Coxiella burnetii (strain CbuK_Q154) (Coxiella burnetii (strain Q154)) protein is NADPH-dependent 7-cyano-7-deazaguanine reductase.